A 1510-amino-acid polypeptide reads, in one-letter code: Chromosome partition protein MukB (1510 aa).

Residues 6–30 adopt a coiled-coil conformation; sequence ELENEIELESDEVIMENENVEEIVD. Residue 75–82 participates in ATP binding; that stretch reads GGNGAGKS. 7 coiled-coil regions span residues 346-506, 553-611, 673-706, 821-846, 876-1064, 1094-1149, and 1249-1304; these read QHRL…HKMS, QQTP…EDIS, MQSQ…RLSQ, SAAR…AQIA, EALM…IQLQ, ERAR…RELV, and DAIE…LQNI. The tract at residues 707–824 is flexible hinge; sequence PDGSEDPRLN…EIPLFGSAAR (118 aa).

This sequence belongs to the SMC family. MukB subfamily. Homodimerization via its hinge domain. Binds to DNA via its C-terminal region. Interacts, and probably forms a ternary complex, with MukE and MukF via its C-terminal region. The complex formation is stimulated by calcium or magnesium. Interacts with tubulin-related protein FtsZ.

The protein resides in the cytoplasm. It localises to the nucleoid. Functionally, plays a central role in chromosome condensation, segregation and cell cycle progression. Functions as a homodimer, which is essential for chromosome partition. Involved in negative DNA supercoiling in vivo, and by this means organize and compact chromosomes. May achieve or facilitate chromosome segregation by condensation DNA from both sides of a centrally located replisome during cell division. The protein is Chromosome partition protein MukB of Haemophilus influenzae (strain PittGG).